The chain runs to 293 residues: MQSFNTIGLIGRLASASTQYSLKRLIAFLTDQKLEVLLDKETSTILPDCDLPVATRPELAQACDLIIVVGGDGSLLSAARAFAGHDVQILGINRGRLGFLTDISPEDIENKVGEVLSGRYLLEQRFLLESTLLRDDEVMSTGLALNDVVIHPGKLIRMIEFELYIDDEFVYRQRSDGLIISSPTGSTAYALSGGGPIMHPNLDAVVLVPLYPHTLSSRPIVVGGNSEIRLIVCENNNLNPLVTCDGQSQTMTQPGDTVFITKSEKRLKLIHPEGHNFYETCRSKLGWASHTGN.

Catalysis depends on aspartate 72, which acts as the Proton acceptor. NAD(+) is bound by residues 72-73 (DG), 146-147 (ND), arginine 157, arginine 174, aspartate 176, 187-192 (TAYALS), and glutamine 247.

This sequence belongs to the NAD kinase family. The cofactor is a divalent metal cation.

The protein resides in the cytoplasm. It carries out the reaction NAD(+) + ATP = ADP + NADP(+) + H(+). In terms of biological role, involved in the regulation of the intracellular balance of NAD and NADP, and is a key enzyme in the biosynthesis of NADP. Catalyzes specifically the phosphorylation on 2'-hydroxyl of the adenosine moiety of NAD to yield NADP. This chain is NAD kinase, found in Teredinibacter turnerae (strain ATCC 39867 / T7901).